A 107-amino-acid polypeptide reads, in one-letter code: uncharacterized protein (107 aa).

Residues 12–32 (IILNIFLALLLVYFIFHCIYG) form a helical membrane-spanning segment.

It localises to the membrane. This is an uncharacterized protein from Rickettsia prowazekii (strain Madrid E).